Reading from the N-terminus, the 143-residue chain is MAAEGRVQRVASELQKVISLLLRTRIKDAKLASATITEVDLSKDLSYAKIYYTCLAIEDAEYIDKAFEKSKGFFRSSIAKSLSLRIVPNLKFIYDTSLDYGMQMEEKIQQALEADSKIIKQDDKSLQENYKQNDKETKAEKLR.

The segment at Asp123–Arg143 is disordered.

The protein belongs to the RbfA family. In terms of assembly, monomer. Binds 30S ribosomal subunits, but not 50S ribosomal subunits or 70S ribosomes.

Its subcellular location is the cytoplasm. Functionally, one of several proteins that assist in the late maturation steps of the functional core of the 30S ribosomal subunit. Associates with free 30S ribosomal subunits (but not with 30S subunits that are part of 70S ribosomes or polysomes). Required for efficient processing of 16S rRNA. May interact with the 5'-terminal helix region of 16S rRNA. This is Ribosome-binding factor A from Francisella tularensis subsp. novicida (strain U112).